The primary structure comprises 292 residues: ATP synthase gamma chain (292 aa).

The protein belongs to the ATPase gamma chain family. As to quaternary structure, F-type ATPases have 2 components, CF(1) - the catalytic core - and CF(0) - the membrane proton channel. CF(1) has five subunits: alpha(3), beta(3), gamma(1), delta(1), epsilon(1). CF(0) has three main subunits: a, b and c.

The protein localises to the cell inner membrane. Functionally, produces ATP from ADP in the presence of a proton gradient across the membrane. The gamma chain is believed to be important in regulating ATPase activity and the flow of protons through the CF(0) complex. This is ATP synthase gamma chain from Methylobacterium sp. (strain 4-46).